Reading from the N-terminus, the 281-residue chain is Formamidopyrimidine-DNA glycosylase (281 aa).

P2 acts as the Schiff-base intermediate with DNA in catalysis. Catalysis depends on E3, which acts as the Proton donor. Catalysis depends on K58, which acts as the Proton donor; for beta-elimination activity. DNA contacts are provided by H100, R119, and R160. The FPG-type zinc finger occupies 245-281; it reads RVYGREGAPCPTPGCTGTVQRIVQSGRSSFFCPLCQQ. The Proton donor; for delta-elimination activity role is filled by R271.

This sequence belongs to the FPG family. As to quaternary structure, monomer. Requires Zn(2+) as cofactor.

The enzyme catalyses Hydrolysis of DNA containing ring-opened 7-methylguanine residues, releasing 2,6-diamino-4-hydroxy-5-(N-methyl)formamidopyrimidine.. The catalysed reaction is 2'-deoxyribonucleotide-(2'-deoxyribose 5'-phosphate)-2'-deoxyribonucleotide-DNA = a 3'-end 2'-deoxyribonucleotide-(2,3-dehydro-2,3-deoxyribose 5'-phosphate)-DNA + a 5'-end 5'-phospho-2'-deoxyribonucleoside-DNA + H(+). Its function is as follows. Involved in base excision repair of DNA damaged by oxidation or by mutagenic agents. Acts as a DNA glycosylase that recognizes and removes damaged bases. Has a preference for oxidized purines, such as 7,8-dihydro-8-oxoguanine (8-oxoG). Has AP (apurinic/apyrimidinic) lyase activity and introduces nicks in the DNA strand. Cleaves the DNA backbone by beta-delta elimination to generate a single-strand break at the site of the removed base with both 3'- and 5'-phosphates. The sequence is that of Formamidopyrimidine-DNA glycosylase from Paracoccus denitrificans (strain Pd 1222).